Reading from the N-terminus, the 343-residue chain is Heat-inducible transcription repressor HrcA (343 aa).

This sequence belongs to the HrcA family.

Its function is as follows. Negative regulator of class I heat shock genes (grpE-dnaK-dnaJ and groELS operons). Prevents heat-shock induction of these operons. This is Heat-inducible transcription repressor HrcA from Clostridium botulinum (strain Alaska E43 / Type E3).